Consider the following 347-residue polypeptide: NADH-quinone oxidoreductase subunit H (347 aa).

The next 9 helical transmembrane spans lie at 13-33 (LIIA…VAYL), 50-70 (PNVV…KFVF), 82-102 (GVFL…WAVI), 115-135 (VGIL…IMGG), 161-181 (IGFV…TDIV), 198-218 (FLDW…ISAL), 248-268 (FLLF…LMTV), 286-306 (VPGI…FAMV), and 325-345 (VFLP…KVFG).

Belongs to the complex I subunit 1 family. In terms of assembly, NDH-1 is composed of 14 different subunits. Subunits NuoA, H, J, K, L, M, N constitute the membrane sector of the complex.

The protein localises to the cell inner membrane. It carries out the reaction a quinone + NADH + 5 H(+)(in) = a quinol + NAD(+) + 4 H(+)(out). Functionally, NDH-1 shuttles electrons from NADH, via FMN and iron-sulfur (Fe-S) centers, to quinones in the respiratory chain. The immediate electron acceptor for the enzyme in this species is believed to be ubiquinone. Couples the redox reaction to proton translocation (for every two electrons transferred, four hydrogen ions are translocated across the cytoplasmic membrane), and thus conserves the redox energy in a proton gradient. This subunit may bind ubiquinone. The sequence is that of NADH-quinone oxidoreductase subunit H from Brucella ovis (strain ATCC 25840 / 63/290 / NCTC 10512).